Reading from the N-terminus, the 306-residue chain is Elongation factor Ts (306 aa).

The involved in Mg(2+) ion dislocation from EF-Tu stretch occupies residues Thr79–Val82.

Belongs to the EF-Ts family.

The protein localises to the cytoplasm. Functionally, associates with the EF-Tu.GDP complex and induces the exchange of GDP to GTP. It remains bound to the aminoacyl-tRNA.EF-Tu.GTP complex up to the GTP hydrolysis stage on the ribosome. This chain is Elongation factor Ts, found in Mesorhizobium japonicum (strain LMG 29417 / CECT 9101 / MAFF 303099) (Mesorhizobium loti (strain MAFF 303099)).